We begin with the raw amino-acid sequence, 194 residues long: dITP/XTP pyrophosphatase (194 aa).

Position 8 to 13 (8 to 13) interacts with substrate; that stretch reads TNNPHK. Residue D69 is the Proton acceptor of the active site. D69 is a binding site for Mg(2+). Residues T70, 150 to 153, K173, and 178 to 179 contribute to the substrate site; these read FGYD and HR.

This sequence belongs to the HAM1 NTPase family. In terms of assembly, homodimer. Requires Mg(2+) as cofactor.

The enzyme catalyses XTP + H2O = XMP + diphosphate + H(+). It catalyses the reaction dITP + H2O = dIMP + diphosphate + H(+). It carries out the reaction ITP + H2O = IMP + diphosphate + H(+). Pyrophosphatase that catalyzes the hydrolysis of nucleoside triphosphates to their monophosphate derivatives, with a high preference for the non-canonical purine nucleotides XTP (xanthosine triphosphate), dITP (deoxyinosine triphosphate) and ITP. Seems to function as a house-cleaning enzyme that removes non-canonical purine nucleotides from the nucleotide pool, thus preventing their incorporation into DNA/RNA and avoiding chromosomal lesions. The sequence is that of dITP/XTP pyrophosphatase from Porphyromonas gingivalis (strain ATCC BAA-308 / W83).